We begin with the raw amino-acid sequence, 278 residues long: Secreted RxLR effector protein 151 (278 aa).

The first 18 residues, methionine 1–cysteine 18, serve as a signal peptide directing secretion. A RxLR-dEER motif is present at residues arginine 49 to arginine 64.

The protein belongs to the RxLR effector family.

Its subcellular location is the secreted. The protein resides in the host endoplasmic reticulum membrane. Secreted effector that completely suppresses the host cell death induced by cell death-inducing proteins. The chain is Secreted RxLR effector protein 151 from Plasmopara viticola (Downy mildew of grapevine).